Reading from the N-terminus, the 126-residue chain is Large ribosomal subunit protein uL22 (126 aa).

Belongs to the universal ribosomal protein uL22 family. Part of the 50S ribosomal subunit.

Functionally, this protein binds specifically to 23S rRNA; its binding is stimulated by other ribosomal proteins, e.g. L4, L17, and L20. It is important during the early stages of 50S assembly. It makes multiple contacts with different domains of the 23S rRNA in the assembled 50S subunit and ribosome. In terms of biological role, the globular domain of the protein is located near the polypeptide exit tunnel on the outside of the subunit, while an extended beta-hairpin is found that lines the wall of the exit tunnel in the center of the 70S ribosome. In Caulobacter vibrioides (strain ATCC 19089 / CIP 103742 / CB 15) (Caulobacter crescentus), this protein is Large ribosomal subunit protein uL22.